Here is a 226-residue protein sequence, read N- to C-terminus: Chalcone--flavanone isomerase (226 aa).

Residues Thr-51, Asn-116, and Ser-194 each coordinate substrate.

This sequence belongs to the chalcone isomerase family.

It carries out the reaction a chalcone = a flavanone.. It participates in secondary metabolite biosynthesis; flavonoid biosynthesis. Its function is as follows. Catalyzes the intramolecular cyclization of bicyclic chalcones into tricyclic (S)-flavanones. Responsible for the isomerization of 4,2',4',6'-tetrahydroxychalcone (also termed chalcone) into naringenin. This Canna generalis (Canna lily) protein is Chalcone--flavanone isomerase (CHI).